Reading from the N-terminus, the 237-residue chain is UPF0280 protein Mbur_0309 (237 aa).

Belongs to the UPF0280 family.

The chain is UPF0280 protein Mbur_0309 from Methanococcoides burtonii (strain DSM 6242 / NBRC 107633 / OCM 468 / ACE-M).